The following is a 135-amino-acid chain: T-cell receptor gamma chain V region 5/10-13 (135 aa).

A signal peptide spans 1–18 (MLLLRWPTFCCLWVFGLG). The v segment stretch occupies residues 19–114 (QLEQTELSVT…DEATYYCAVC (96 aa)). Residues 115-135 (RSGTSWVKIFAKGTKLVVIPP) are j segment.

This is T-cell receptor gamma chain V region 5/10-13 (Tcrg-V1) from Mus musculus (Mouse).